The sequence spans 713 residues: Oligopeptidase PhomG (713 aa).

His461 lines the Zn(2+) pocket. The active site involves Glu462. Positions 465 and 468 each coordinate Zn(2+).

This sequence belongs to the peptidase M3 family. In terms of assembly, monomer. Requires Zn(2+) as cofactor.

Its pathway is mycotoxin biosynthesis. Functionally, oligopeptidase; part of the gene cluster that mediates the biosynthesis of the phomopsins, a group of hexapeptide mycotoxins which infects lupins and causes lupinosis disease in livestock. Within the pathway, phomG and phomG' are probably involved in the processing of the phomA and phomA' precursors. The pathway starts with the processing of the precursor phomA by several endopeptidases including kexin proteases as well as the cluster-specific S41 family peptidase phomP1 and the oligopeptidase phomG to produce 10 identical copies of the hexapeptide Tyr-Val-Ile-Pro-Ile-Asp. After being excised from the precursor peptide, the core peptides are cyclized and modified post-translationally by enzymes encoded within the gene cluster. The timing and order of proteolysis of the phomA precursor and PTMs are still unknown. Two tyrosinase-like enzymes, phomQ1 and phomQ2, catalyze the chlorination and hydroxylation of Tyr, respectively. PhomYb, is proposed to be involved in the construction of the macrocyclic structure. The other 4 ustYa family proteins may be involved in PTMs that generate the unique structure of phomopsin A. PhomYa is required for the hydroxylation of C-beta of Tyr. PhomYc, phomYd, and phomYe are responsible for the biosynthesis of 2,3-dehydroisoleucine (dIle), 2,3-dehydroaspartic acid (dAsp), and 3,4-dehydroproline (dPro), respectively. While dIle formation by phomYc is indispensable for the installation of dAsp by phomYd, the order of the other PTMs have not been elucidated yet. Most of the biosynthetic enzymes likely have broad substrate specificity, and thus, there might be a metabolic grid from a precursor to phomopsin A. The enzyme(s) responsible for the biosynthesis of 3,4-dehydrovaline (dVal) have also not been identified yet. Finally, phomM acts as an S-adenosylmethionine-dependent alpha-N-methyltransferase that catalyzes two successive N-methylation reactions, converting N-desmethyl-phomopsin A to phomopsin A and phomopsin A further to an N,N-dimethylated congener called phomopsin E. The sequence is that of Oligopeptidase PhomG from Diaporthe leptostromiformis (Lupinosis disease fungus).